Reading from the N-terminus, the 131-residue chain is Profilin-1 (131 aa).

It belongs to the profilin family. In terms of assembly, occurs in many kinds of cells as a complex with monomeric actin in a 1:1 ratio.

It is found in the cytoplasm. It localises to the cytoskeleton. In terms of biological role, binds to actin and affects the structure of the cytoskeleton. At high concentrations, profilin prevents the polymerization of actin, whereas it enhances it at low concentrations. By binding to PIP2, it inhibits the formation of IP3 and DG. The sequence is that of Profilin-1 from Malus domestica (Apple).